A 142-amino-acid chain; its full sequence is Hemoglobin subunit alpha (142 aa).

One can recognise a Globin domain in the interval 2-142 (VLSAADKTNV…LSTVLTSKYR (141 aa)). Residue Ser-4 is modified to Phosphoserine. Lys-8 is subject to N6-succinyllysine. Thr-9 bears the Phosphothreonine mark. Lys-12 carries the post-translational modification N6-succinyllysine. Lys-17 carries the N6-acetyllysine; alternate modification. Lys-17 carries the post-translational modification N6-succinyllysine; alternate. Tyr-25 carries the post-translational modification Phosphotyrosine. Ser-36 bears the Phosphoserine mark. At Lys-41 the chain carries N6-succinyllysine. Ser-50 carries the phosphoserine modification. Gln-59 lines the O2 pocket. A heme b-binding site is contributed by His-88. Phosphothreonine is present on Thr-109. At Ser-125 the chain carries Phosphoserine. Thr-135 and Thr-138 each carry phosphothreonine. Ser-139 bears the Phosphoserine mark.

Belongs to the globin family. As to quaternary structure, heterotetramer of two alpha chains and two beta chains. In terms of tissue distribution, red blood cells.

Its function is as follows. Involved in oxygen transport from the lung to the various peripheral tissues. Hemopressin acts as an antagonist peptide of the cannabinoid receptor CNR1. Hemopressin-binding efficiently blocks cannabinoid receptor CNR1 and subsequent signaling. This Monodelphis domestica (Gray short-tailed opossum) protein is Hemoglobin subunit alpha (HBA).